We begin with the raw amino-acid sequence, 201 residues long: Small ribosomal subunit protein uS4c (201 aa).

The 61-residue stretch at 89–149 (MRLDNILFRL…DEQKSRALIQ (61 aa)) folds into the S4 RNA-binding domain.

The protein belongs to the universal ribosomal protein uS4 family. Part of the 30S ribosomal subunit. Contacts protein S5. The interaction surface between S4 and S5 is involved in control of translational fidelity.

Its subcellular location is the plastid. The protein resides in the chloroplast. In terms of biological role, one of the primary rRNA binding proteins, it binds directly to 16S rRNA where it nucleates assembly of the body of the 30S subunit. Functionally, with S5 and S12 plays an important role in translational accuracy. In Coffea arabica (Arabian coffee), this protein is Small ribosomal subunit protein uS4c (rps4).